Reading from the N-terminus, the 198-residue chain is MLRIAIKEQNSHFEHGLKIIMTRLANQWQQKIDFLPPEEIDNADIAFLALDDDWFSAGCYQIPMHTQHQLRAIICNKCDKEKLMFRPCLYMLPHIYREDDVEEITRKMILILHKRALRHSVPSGICHYCTTRHFSVTERHLLKLIASGYHLSETAALLSLSEEQTKSLRRSIMRKLHVKTEQQFLKYIRVNLHFLLSK.

The 66-residue stretch at 127–192 (HYCTTRHFSV…QFLKYIRVNL (66 aa)) folds into the HTH luxR-type domain.

The protein resides in the fimbrium. This is Fimbriae W protein (fimW) from Salmonella typhimurium (strain LT2 / SGSC1412 / ATCC 700720).